The primary structure comprises 337 residues: GTPase Obg (337 aa).

Residues 4-162 (SNFIDYVKVC…AWVILELKVL (159 aa)) enclose the Obg domain. The OBG-type G domain occupies 163-329 (ADVGLVGFPN…LKDLLWTTMN (167 aa)). Residues 169-176 (GFPNAGKS), 194-198 (FTTLA), 216-219 (DIPG), 283-286 (SKSD), and 310-312 (SSY) contribute to the GTP site. Mg(2+) contacts are provided by S176 and T196.

This sequence belongs to the TRAFAC class OBG-HflX-like GTPase superfamily. OBG GTPase family. As to quaternary structure, monomer. Mg(2+) serves as cofactor.

The protein resides in the cytoplasm. An essential GTPase which binds GTP, GDP and possibly (p)ppGpp with moderate affinity, with high nucleotide exchange rates and a fairly low GTP hydrolysis rate. Plays a role in control of the cell cycle, stress response, ribosome biogenesis and in those bacteria that undergo differentiation, in morphogenesis control. This chain is GTPase Obg, found in Cytophaga hutchinsonii (strain ATCC 33406 / DSM 1761 / CIP 103989 / NBRC 15051 / NCIMB 9469 / D465).